The primary structure comprises 573 residues: Cytochrome P450 monooxygenase GME11363 (573 aa).

The helical transmembrane segment at 10–30 (IGVVAAVLLAALILLYRAALP) threads the bilayer. Cys-519 contributes to the heme binding site.

This sequence belongs to the cytochrome P450 family. The cofactor is heme.

Its subcellular location is the membrane. It functions in the pathway secondary metabolite biosynthesis. In terms of biological role, cytochrome P450 monooxygenase; part of the gene cluster that mediates the biosynthesis of dibenzodioxocinones such as pestalotiollide B, a novel class of inhibitors against cholesterol ester transfer protein (CEPT). The biosynthesis initiates from condensation of acetate and malonate units catalyzed by the non-reducing PKS pks8/GME11356. Pks8/GME11356 lacks a thioesterase (TE) domain, which is important to the cyclizing of the third ring of atrochrysone carboxylic acid, and the esterase GME11355 might play the role of TE and catalyzes the cyclization reaction of the C ring. The lactamase-like protein GME11357 (or other beta-lactamases in Pestalotiopsis microspora) probably hydrolyzes the thioester bond between the ACP of pks8/GME11356 and the intermediate to release atrochrysone carboxylic acid, which is spontaneously dehydrates to form endocrocin anthrone. Endocrocin anthrone is further converted to emodin via the endocrocin intermediate. Emodin is then oxidized by several enzymes such as the Baeyer-Villiger oxidase GME11358, the oxidoreductase GME11367, the short chain dehydrogenase/reductase GME11373, as well as by other oxidoreductases from the cluster, to modify the A and C rings and open the B ring, and finally yield monodictyphenone. The prenyltransferase GME11375 may catalyze the addition reaction between the C5 side chains and the carbon bone of dibenzodioxocinones. The remaining biochemical reactions to the final product dibenzodioxocinones should be methylation catalyzed by methyltransferase GME11366 and reduction and lactonization reaction catalyzed by a series of oxidordeuctases. The sequence is that of Cytochrome P450 monooxygenase GME11363 from Pestalotiopsis microspora.